Here is a 332-residue protein sequence, read N- to C-terminus: UDP-3-O-acylglucosamine N-acyltransferase (332 aa).

His231 serves as the catalytic Proton acceptor.

This sequence belongs to the transferase hexapeptide repeat family. LpxD subfamily. Homotrimer.

The catalysed reaction is a UDP-3-O-[(3R)-3-hydroxyacyl]-alpha-D-glucosamine + a (3R)-hydroxyacyl-[ACP] = a UDP-2-N,3-O-bis[(3R)-3-hydroxyacyl]-alpha-D-glucosamine + holo-[ACP] + H(+). Its pathway is bacterial outer membrane biogenesis; LPS lipid A biosynthesis. Functionally, catalyzes the N-acylation of UDP-3-O-acylglucosamine using 3-hydroxyacyl-ACP as the acyl donor. Is involved in the biosynthesis of lipid A, a phosphorylated glycolipid that anchors the lipopolysaccharide to the outer membrane of the cell. This Ruthia magnifica subsp. Calyptogena magnifica protein is UDP-3-O-acylglucosamine N-acyltransferase.